We begin with the raw amino-acid sequence, 243 residues long: tRNA (guanine-N(1)-)-methyltransferase (243 aa).

S-adenosyl-L-methionine is bound by residues G113 and 133–138; that span reads IGDFVL.

This sequence belongs to the RNA methyltransferase TrmD family. Homodimer.

It localises to the cytoplasm. The catalysed reaction is guanosine(37) in tRNA + S-adenosyl-L-methionine = N(1)-methylguanosine(37) in tRNA + S-adenosyl-L-homocysteine + H(+). In terms of biological role, specifically methylates guanosine-37 in various tRNAs. This Bacillus licheniformis (strain ATCC 14580 / DSM 13 / JCM 2505 / CCUG 7422 / NBRC 12200 / NCIMB 9375 / NCTC 10341 / NRRL NRS-1264 / Gibson 46) protein is tRNA (guanine-N(1)-)-methyltransferase.